We begin with the raw amino-acid sequence, 264 residues long: Movement protein (264 aa).

Positions 211–264 (RTKSSKRGPKNNNNLGKGRSGGRPKPKSFDEVEKEFDNLIEDEAETSVADSDSY) are disordered. Over residues 237-247 (KSFDEVEKEFD) the composition is skewed to basic and acidic residues.

This sequence belongs to the tobamovirus movement protein family. Binds to host RBCS at the plasmodesmata; this interaction seems required for viral systemic movement. In resistant plants, interacts with host MBP2C at host microtubules; this interaction prevents virus cell to cell movement. In resistant plants, interacts with host resistance (R) protein (e.g. tomato ToMV resistance protein TM-2(2), AC Q71BG9) at the host plasma membrane; this interaction triggers host defense responses leading to programmed cell death.

The protein localises to the host cytoplasm. Its subcellular location is the host cytoskeleton. It localises to the host cell junction. The protein resides in the host plasmodesma. In terms of biological role, transports viral genome to neighboring plant cells directly through plasmosdesmata, without any budding. The movement protein allows efficient cell to cell propagation, by bypassing the host cell wall barrier. Forms a ribonucleoprotein complex with viral RNA. Binds microtubules and modulates microtubule stability. Can bind double-stranded DNA. Triggers host hypersensitive defense reaction in incompatible plants harboring resistance (R) proteins. The protein is Movement protein (MP) of Tomato mosaic virus (strain S-1) (ToMV).